Here is a 328-residue protein sequence, read N- to C-terminus: Probable GDP-L-fucose synthase 1 (328 aa).

Gly25–Gly31 is a binding site for NADP(+). Tyr152 acts as the Proton donor/acceptor in catalysis. NADP(+)-binding positions include Lys156, Pro179–Leu182, and His195. Substrate contacts are provided by Arg203, Trp218, Arg225, and Asp285.

It belongs to the NAD(P)-dependent epimerase/dehydratase family. Fucose synthase subfamily. As to quaternary structure, homodimer.

It catalyses the reaction GDP-beta-L-fucose + NADP(+) = GDP-4-dehydro-alpha-D-rhamnose + NADPH + H(+). The protein operates within nucleotide-sugar biosynthesis; GDP-L-fucose biosynthesis via de novo pathway; GDP-L-fucose from GDP-alpha-D-mannose: step 2/2. Functionally, catalyzes the two-step NADP-dependent conversion of GDP-4-dehydro-6-deoxy-D-mannose to GDP-fucose, involving an epimerase and a reductase reaction. The chain is Probable GDP-L-fucose synthase 1 from Oryza sativa subsp. japonica (Rice).